The primary structure comprises 262 residues: MNKVILRILAVLFLLGIYAVSAQSDGRIVGGADTSSYYTKYVVQLRRRSSSSSSYAQTCGGCILDAVTIATAAHCVYNREAENFLVVAGDDSRGGMNGVVVRVSKLIPHELYNSSTMDNDIALVVVDPPLPLDSFSTMEAIEIASEQPAVGVQATISGWGYTKENGLSSDQLQQVKVPIVDSEKCQEAYYWRPISEGMLCAGLSEGGKDACQGDSGGPLVVANKLAGIVSWGEGCARPNYPGVYANVAYYKDWIAKQRTSYV.

Residues 1 to 22 form the signal peptide; sequence MNKVILRILAVLFLLGIYAVSA. A propeptide spans 23–27 (activation peptide); sequence QSDGR. The region spanning 28–259 is the Peptidase S1 domain; sequence IVGGADTSSY…YKDWIAKQRT (232 aa). A disulfide bond links Cys59 and Cys75. Active-site charge relay system residues include His74 and Asp120. 2 cysteine pairs are disulfide-bonded: Cys185–Cys200 and Cys211–Cys235. Ser215 serves as the catalytic Charge relay system.

Belongs to the peptidase S1 family.

The protein localises to the secreted. The protein resides in the extracellular space. The enzyme catalyses Preferential cleavage: Arg-|-Xaa, Lys-|-Xaa.. The chain is Trypsin eta (etaTry) from Drosophila melanogaster (Fruit fly).